Here is a 359-residue protein sequence, read N- to C-terminus: Cyclin puc1 (359 aa).

This sequence belongs to the cyclin family.

Its function is as follows. Function in exit from the mitotic cycle. Contributes to negative regulation of the timing of sexual development in fission yeast, and functions at the transition between cycling and non-cycling cells. Interacts with protein kinase A. This Schizosaccharomyces pombe (strain 972 / ATCC 24843) (Fission yeast) protein is Cyclin puc1 (puc1).